The following is a 493-amino-acid chain: Ketol-acid reductoisomerase (NADP(+)) (493 aa).

Positions 14–208 (LDQLGRCRFM…GGHRAGVLES (195 aa)) constitute a KARI N-terminal Rossmann domain. Residues 45–48 (CGAQ), arginine 68, arginine 76, serine 78, and 108–110 (DKQ) contribute to the NADP(+) site. Histidine 132 is an active-site residue. Position 158 (glycine 158) interacts with NADP(+). KARI C-terminal knotted domains lie at 209–345 (SFVA…APKG) and 346–486 (ENIK…MTDM). Residues aspartate 217, glutamate 221, glutamate 390, and glutamate 394 each contribute to the Mg(2+) site. Position 415 (serine 415) interacts with substrate.

The protein belongs to the ketol-acid reductoisomerase family. Mg(2+) serves as cofactor.

The enzyme catalyses (2R)-2,3-dihydroxy-3-methylbutanoate + NADP(+) = (2S)-2-acetolactate + NADPH + H(+). It carries out the reaction (2R,3R)-2,3-dihydroxy-3-methylpentanoate + NADP(+) = (S)-2-ethyl-2-hydroxy-3-oxobutanoate + NADPH + H(+). The protein operates within amino-acid biosynthesis; L-isoleucine biosynthesis; L-isoleucine from 2-oxobutanoate: step 2/4. Its pathway is amino-acid biosynthesis; L-valine biosynthesis; L-valine from pyruvate: step 2/4. Involved in the biosynthesis of branched-chain amino acids (BCAA). Catalyzes an alkyl-migration followed by a ketol-acid reduction of (S)-2-acetolactate (S2AL) to yield (R)-2,3-dihydroxy-isovalerate. In the isomerase reaction, S2AL is rearranged via a Mg-dependent methyl migration to produce 3-hydroxy-3-methyl-2-ketobutyrate (HMKB). In the reductase reaction, this 2-ketoacid undergoes a metal-dependent reduction by NADPH to yield (R)-2,3-dihydroxy-isovalerate. This is Ketol-acid reductoisomerase (NADP(+)) from Histophilus somni (strain 2336) (Haemophilus somnus).